Consider the following 301-residue polypeptide: NAD kinase (301 aa).

Residue aspartate 73 is the Proton acceptor of the active site. NAD(+) is bound by residues 73–74 (DG), 151–152 (ND), arginine 179, aspartate 181, 192–197 (TAYALS), alanine 216, and glutamine 250.

This sequence belongs to the NAD kinase family. A divalent metal cation serves as cofactor.

The protein localises to the cytoplasm. It carries out the reaction NAD(+) + ATP = ADP + NADP(+) + H(+). Its function is as follows. Involved in the regulation of the intracellular balance of NAD and NADP, and is a key enzyme in the biosynthesis of NADP. Catalyzes specifically the phosphorylation on 2'-hydroxyl of the adenosine moiety of NAD to yield NADP. The chain is NAD kinase from Methylibium petroleiphilum (strain ATCC BAA-1232 / LMG 22953 / PM1).